The primary structure comprises 311 residues: Aspartate carbamoyltransferase catalytic subunit (311 aa).

Residues Arg-58 and Thr-59 each contribute to the carbamoyl phosphate site. Lys-86 contributes to the L-aspartate binding site. Carbamoyl phosphate contacts are provided by Arg-108, His-136, and Gln-139. Residues Arg-169 and Arg-224 each contribute to the L-aspartate site. 2 residues coordinate carbamoyl phosphate: Gly-265 and Pro-266.

Belongs to the aspartate/ornithine carbamoyltransferase superfamily. ATCase family. As to quaternary structure, heterododecamer (2C3:3R2) of six catalytic PyrB chains organized as two trimers (C3), and six regulatory PyrI chains organized as three dimers (R2).

It carries out the reaction carbamoyl phosphate + L-aspartate = N-carbamoyl-L-aspartate + phosphate + H(+). It functions in the pathway pyrimidine metabolism; UMP biosynthesis via de novo pathway; (S)-dihydroorotate from bicarbonate: step 2/3. Its function is as follows. Catalyzes the condensation of carbamoyl phosphate and aspartate to form carbamoyl aspartate and inorganic phosphate, the committed step in the de novo pyrimidine nucleotide biosynthesis pathway. This chain is Aspartate carbamoyltransferase catalytic subunit, found in Geotalea daltonii (strain DSM 22248 / JCM 15807 / FRC-32) (Geobacter daltonii).